Here is a 502-residue protein sequence, read N- to C-terminus: Protein DETOXIFICATION 49 (502 aa).

The next 12 helical transmembrane spans lie at 41–61, 75–95, 123–143, 153–173, 190–210, 216–236, 267–287, 293–313, 338–358, 372–392, 414–434, and 439–459; these read LPLILTGLLLYSRSMISMLFL, LALGFANITGYSLLSGLSIGM, LLCSLPISILWLNIKKILLFF, AEIFILFSLPDLILQSFLHPI, AFFAVLLHIPINYLLVSSLGL, ALGAIWTNVNLLGFLIIYIVF, VSVCLEWWWYEIMILLCGLLL, VASMGILIQTTALIYIFPSSL, RTGLSLSLGLGLLAMFFALMV, IVKLTSMVLPIIGLCELGNCP, LCCFYFVGMPVAVWLSFFSGF, and LWLGLFAAQGSCLISMLVVLA.

This sequence belongs to the multi antimicrobial extrusion (MATE) (TC 2.A.66.1) family.

The protein localises to the membrane. The sequence is that of Protein DETOXIFICATION 49 from Arabidopsis thaliana (Mouse-ear cress).